Reading from the N-terminus, the 262-residue chain is Indole-3-glycerol phosphate synthase (262 aa).

Belongs to the TrpC family.

The enzyme catalyses 1-(2-carboxyphenylamino)-1-deoxy-D-ribulose 5-phosphate + H(+) = (1S,2R)-1-C-(indol-3-yl)glycerol 3-phosphate + CO2 + H2O. It participates in amino-acid biosynthesis; L-tryptophan biosynthesis; L-tryptophan from chorismate: step 4/5. This Leuconostoc mesenteroides subsp. mesenteroides (strain ATCC 8293 / DSM 20343 / BCRC 11652 / CCM 1803 / JCM 6124 / NCDO 523 / NBRC 100496 / NCIMB 8023 / NCTC 12954 / NRRL B-1118 / 37Y) protein is Indole-3-glycerol phosphate synthase.